The sequence spans 175 residues: Ribosome maturation factor RimM (175 aa).

In terms of domain architecture, PRC barrel spans 96–172 (PDTYYDHQLE…LIEIDPPDGL (77 aa)).

This sequence belongs to the RimM family. As to quaternary structure, binds ribosomal protein uS19.

Its subcellular location is the cytoplasm. An accessory protein needed during the final step in the assembly of 30S ribosomal subunit, possibly for assembly of the head region. Essential for efficient processing of 16S rRNA. May be needed both before and after RbfA during the maturation of 16S rRNA. It has affinity for free ribosomal 30S subunits but not for 70S ribosomes. In Mycobacterium avium (strain 104), this protein is Ribosome maturation factor RimM.